Consider the following 326-residue polypeptide: Thrombopoietin (326 aa).

The first 21 residues, 1–21, serve as a signal peptide directing secretion; it reads MELTDLLLVAILLLTARLTLS. 2 disulfides stabilise this stretch: C28-C172 and C50-C106. N-linked (GlcNAc...) asparagine glycosylation is found at N197, N206, N235, N249, and N256. Residues 307-326 are disordered; that stretch reads FPPSPTFPTPGSPPQLPPVS. Positions 308-326 are enriched in pro residues; sequence PPSPTFPTPGSPPQLPPVS.

It belongs to the EPO/TPO family.

It localises to the secreted. Lineage-specific cytokine affecting the proliferation and maturation of megakaryocytes from their committed progenitor cells. It acts at a late stage of megakaryocyte development. It may be the major physiological regulator of circulating platelets. The chain is Thrombopoietin (Thpo) from Rattus norvegicus (Rat).